The primary structure comprises 168 residues: Large ribosomal subunit protein uL5 (168 aa).

It belongs to the universal ribosomal protein uL5 family. In terms of assembly, part of the 50S ribosomal subunit; contacts the 5S rRNA and probably tRNA. Forms a bridge to the 30S subunit in the 70S ribosome.

In terms of biological role, this is one of the proteins that bind and probably mediate the attachment of the 5S RNA into the large ribosomal subunit, where it forms part of the central protuberance. In the 70S ribosome it contacts protein S13 of the 30S subunit (bridge B1b), connecting the 2 subunits; this bridge is implicated in subunit movement. May contact the P site tRNA; the 5S rRNA and some of its associated proteins might help stabilize positioning of ribosome-bound tRNAs. The polypeptide is Large ribosomal subunit protein uL5 (Methanosphaera stadtmanae (strain ATCC 43021 / DSM 3091 / JCM 11832 / MCB-3)).